We begin with the raw amino-acid sequence, 4644 residues long: Cytoplasmic dynein 1 heavy chain 1 (4644 aa).

The residue at position 2 (serine 2) is an N-acetylserine. The stem stretch occupies residues 2-1865 (SETGGGEDGS…SIQMANAKFN (1864 aa)). Coiled coils occupy residues 48–69 (AALEAALEEKSALEQMRKFLSD), 179–200 (SVEKKIAELEMGLLHLQQNIEI), 453–476 (AHRKLQARLDQMRKFRRQHEQLRA), and 541–564 (TEAWEAAMKRYDERIDRVETRITA). Serine 68 is subject to Phosphoserine. The interaction with DYNC1I2 stretch occupies residues 446-701 (MVWRINPAHR…NTQEIFDDWA (256 aa)). The interval 649–800 (AKQIDRQLTA…EKVEERNTIS (152 aa)) is interaction with DYNC1LI2. Residue lysine 1123 is modified to N6-acetyllysine. A coiled-coil region spans residues 1169–1201 (TYVQSLKRKIKQFEKQVELYRNGQRLLEKQRFQ). Position 1228 is a phosphoserine (serine 1228). 2 coiled-coil regions span residues 1229–1250 (AIQQQVANLQMKIVQEDRAVES) and 1355–1371 (RKLRQNLDGLLNQLKNF). AAA regions lie at residues 1866 to 2097 (YGFE…VLVS), 2178 to 2450 (EELK…LTRL), 2554 to 2803 (EVET…WVRG), and 2897 to 3166 (VFYE…GGRT). ATP contacts are provided by residues 1904–1911 (GPAGTGKT) and 2222–2229 (GPSGSGKS). The interval 2389–2409 (EDEAQRRRKGKEDEGEEAASP) is disordered. ATP contacts are provided by residues 2593–2600 (GPPGSGKT) and 2935–2942 (GVSGAGKT). Coiled coils occupy residues 3187–3273 (EKRS…ADKQ), 3394–3498 (AIAQ…KNQM), and 3735–3798 (EFQL…VSQQ). A stalk region spans residues 3187 to 3498 (EKRSELEEQQ…KTSETFKNQM (312 aa)). Residue lysine 3478 is modified to N6-acetyllysine. AAA regions lie at residues 3551 to 3780 (LSNA…EVTR) and 4003 to 4219 (AHMF…TVDT). Serine 4160 bears the Phosphoserine mark. Position 4281 is an N6-acetyllysine (lysine 4281). The residue at position 4364 (threonine 4364) is a Phosphothreonine.

It belongs to the dynein heavy chain family. In terms of assembly, homodimer. The cytoplasmic dynein 1 complex consists of two catalytic heavy chains (HCs) and a number of non-catalytic subunits presented by intermediate chains (ICs), light intermediate chains (LICs) and light chains (LCs); the composition seems to vary in respect to the IC, LIC and LC composition. The heavy chain homodimer serves as a scaffold for the probable homodimeric assembly of the respective non-catalytic subunits. The ICs and LICs bind directly to the HC dimer and dynein LCs assemble on the IC dimer. Interacts with DYNC1LI1; DYNC1LI1 and DYNC1LI2 bind mutually exclusive to DYNC1H1. Interacts with DYNC1LI2; DYNC1LI1 and DYNC1LI2 bind mutually exclusive to DYNC1H1. Interacts with DYNC1I2. Interacts with BICD2. Interacts with DNALI1.

The protein localises to the cytoplasm. Its subcellular location is the cytoskeleton. Cytoplasmic dynein 1 acts as a motor for the intracellular retrograde motility of vesicles and organelles along microtubules. Dynein has ATPase activity; the force-producing power stroke is thought to occur on release of ADP. Plays a role in mitotic spindle assembly and metaphase plate congression. The protein is Cytoplasmic dynein 1 heavy chain 1 (Dync1h1) of Rattus norvegicus (Rat).